The sequence spans 366 residues: Neutral protease 2 homolog MGYG_04094 (366 aa).

An N-terminal signal peptide occupies residues 1-19; sequence MQILAALSAIGALVATATA. A propeptide spanning residues 20–188 is cleaved from the precursor; the sequence is AAVPNAPAKQ…NKSRSTIDKR (169 aa). Disulfide bonds link Cys196/Cys267 and Cys274/Cys292. His317 is a binding site for Zn(2+). Glu318 is a catalytic residue. Residues His321 and Asp332 each contribute to the Zn(2+) site.

The protein belongs to the peptidase M35 family. The cofactor is Zn(2+).

Its subcellular location is the secreted. The catalysed reaction is Preferential cleavage of bonds with hydrophobic residues in P1'. Also 3-Asn-|-Gln-4 and 8-Gly-|-Ser-9 bonds in insulin B chain.. Functionally, secreted metalloproteinase that allows assimilation of proteinaceous substrates. Shows high activities on basic nuclear substrates such as histone and protamine. May be involved in virulence. This chain is Neutral protease 2 homolog MGYG_04094, found in Arthroderma gypseum (strain ATCC MYA-4604 / CBS 118893) (Microsporum gypseum).